Here is a 370-residue protein sequence, read N- to C-terminus: tRNA-specific 2-thiouridylase MnmA (370 aa).

ATP is bound by residues 24–31 (AMSGGVDS) and leucine 50. Residue cysteine 119 is the Nucleophile of the active site. An intrachain disulfide couples cysteine 119 to cysteine 215. Residue glycine 143 participates in ATP binding. Residues 165–167 (KDQ) form an interaction with tRNA region. Cysteine 215 acts as the Cysteine persulfide intermediate in catalysis.

It belongs to the MnmA/TRMU family.

Its subcellular location is the cytoplasm. The enzyme catalyses S-sulfanyl-L-cysteinyl-[protein] + uridine(34) in tRNA + AH2 + ATP = 2-thiouridine(34) in tRNA + L-cysteinyl-[protein] + A + AMP + diphosphate + H(+). In terms of biological role, catalyzes the 2-thiolation of uridine at the wobble position (U34) of tRNA, leading to the formation of s(2)U34. The protein is tRNA-specific 2-thiouridylase MnmA of Wolbachia pipientis wMel.